We begin with the raw amino-acid sequence, 113 residues long: MHEISLIESVVALVEDERRKQDFSRVRMIRLRLGALGHAEPEALRFCFDAVTRGTIAEGARLDIDIVLGEGWCSSCSRTVPLEERFAACPICGNAPVQMTAGDELRVAEMEVE.

A Ni(2+)-binding site is contributed by His-2. The Zn(2+) site is built by Cys-73, Cys-76, Cys-89, and Cys-92.

This sequence belongs to the HypA/HybF family.

Functionally, involved in the maturation of [NiFe] hydrogenases. Required for nickel insertion into the metal center of the hydrogenase. The sequence is that of Hydrogenase maturation factor HypA from Methylocella silvestris (strain DSM 15510 / CIP 108128 / LMG 27833 / NCIMB 13906 / BL2).